The following is a 299-amino-acid chain: N-acetylmuramic acid 6-phosphate etherase (299 aa).

The region spanning 54–217 (TIAQYKKGGR…STITMVGVGK (164 aa)) is the SIS domain. Glu-82 acts as the Proton donor in catalysis. Glu-113 is an active-site residue.

Belongs to the GCKR-like family. MurNAc-6-P etherase subfamily. In terms of assembly, homodimer.

The enzyme catalyses N-acetyl-D-muramate 6-phosphate + H2O = N-acetyl-D-glucosamine 6-phosphate + (R)-lactate. It participates in amino-sugar metabolism; N-acetylmuramate degradation. Its function is as follows. Specifically catalyzes the cleavage of the D-lactyl ether substituent of MurNAc 6-phosphate, producing GlcNAc 6-phosphate and D-lactate. In Staphylococcus aureus (strain USA300), this protein is N-acetylmuramic acid 6-phosphate etherase.